The following is a 212-amino-acid chain: Protein FAM177A1 (212 aa).

At Met-1 the chain carries N-acetylmethionine. A compositionally biased stretch (basic and acidic residues) spans 1-11; sequence MEGEPASREEG. The interval 1 to 33 is disordered; sequence MEGEPASREEGEAVNASGAAAASAFRESAQQMS. Residues 13–29 are compositionally biased toward low complexity; it reads AVNASGAAAASAFRESA. Ser-69 is modified (phosphoserine). Thr-70 carries the phosphothreonine modification. A coiled-coil region spans residues 135–172; that stretch reads IDEYYRMKKEEEEEEEENRMSEEAERQYQQNKLQADSV. Residues 146–179 form a disordered region; sequence EEEEEENRMSEEAERQYQQNKLQADSVVQSDQPE. A compositionally biased stretch (polar residues) spans 161 to 179; that stretch reads QYQQNKLQADSVVQSDQPE.

This sequence belongs to the FAM177 family.

This is Protein FAM177A1 (FAM177A1) from Bos taurus (Bovine).